Consider the following 89-residue polypeptide: Large ribosomal subunit protein uL23cz/uL23cy (89 aa).

It belongs to the universal ribosomal protein uL23 family. As to quaternary structure, part of the 50S ribosomal subunit.

It localises to the plastid. The protein resides in the chloroplast. Functionally, binds to 23S rRNA. This chain is Large ribosomal subunit protein uL23cz/uL23cy (rpl23-A), found in Calycanthus floridus var. glaucus (Eastern sweetshrub).